The chain runs to 354 residues: Dihydroflavonol 4-reductase (354 aa).

NADP(+) is bound by residues Lys-44 and Tyr-163.

Belongs to the NAD(P)-dependent epimerase/dehydratase family. Dihydroflavonol-4-reductase subfamily.

The enzyme catalyses a (2R,3S,4S)-leucoanthocyanidin + NADP(+) = a (2R,3R)-dihydroflavonol + NADPH + H(+). It catalyses the reaction (2S)-flavan-4-ol + NADP(+) = (2S)-flavanone + NADPH + H(+). Its pathway is pigment biosynthesis; anthocyanin biosynthesis. Functionally, bifunctional enzyme involved in flavonoid metabolism. This chain is Dihydroflavonol 4-reductase (ANT18), found in Hordeum vulgare (Barley).